The primary structure comprises 107 residues: CLAVATA3/ESR (CLE)-related protein 10 (107 aa).

Positions 1 to 23 (MKTNRNRPINILIVFFLLTTARA) are cleaved as a signal peptide. N-linked (GlcNAc...) asparagine glycosylation is found at Asn-27 and Asn-30. The disordered stretch occupies residues 73-107 (SRQPLFSPPPPPTEIDQRYGVEKRLVPSGPNPLHN). The segment covering 87 to 97 (IDQRYGVEKRL) has biased composition (basic and acidic residues). A hydroxyproline mark is found at Pro-99 and Pro-102. Pro-102 is a glycosylation site (O-linked (Ara...) hydroxyproline).

This sequence belongs to the CLV3/ESR signal peptide family. In terms of processing, the O-glycosylation (arabinosylation) of the hydroxyproline Pro-102 enhances binding affinity of the CLE10p peptide for its receptor. In terms of tissue distribution, expressed in stems, apex, leaves, flowers, siliques and pollen.

Its subcellular location is the secreted. It is found in the extracellular space. Extracellular signal peptide that regulates cell fate. Represses root apical meristem maintenance. Regulates the transition of protophloem cells from proliferation to differentiation, thus impinging on postembryonic growth capacity of the root meristem; this signaling pathway requires CRN and CLV2. This Arabidopsis thaliana (Mouse-ear cress) protein is CLAVATA3/ESR (CLE)-related protein 10.